We begin with the raw amino-acid sequence, 262 residues long: MIDKSAYVHPSSIVRKNAIIHANSYVGPFCFIDSQVEIGARTVLKSHVIINGLTYVGEDNFIYQFSSIGEENQDLKYSGENTKVYIGDRNKIRENSTIHRGTVQSNKITKIGNDNLFMVNVHIAHDCVIENNCVMANNVTLGGHVKIGNHVVIGGMTAVHQNCIIGSHVMIGGCSGISQDVPPFILAQGNHAIPFGINFEGLKRRGFDKKTISVIKNAYKIIYKRGNNLNNIKKELIKLSESNKIINLFLDFFSNSSRGFIR.

The protein belongs to the transferase hexapeptide repeat family. LpxA subfamily. Homotrimer.

It localises to the cytoplasm. The catalysed reaction is a (3R)-hydroxyacyl-[ACP] + UDP-N-acetyl-alpha-D-glucosamine = a UDP-3-O-[(3R)-3-hydroxyacyl]-N-acetyl-alpha-D-glucosamine + holo-[ACP]. Its pathway is glycolipid biosynthesis; lipid IV(A) biosynthesis; lipid IV(A) from (3R)-3-hydroxytetradecanoyl-[acyl-carrier-protein] and UDP-N-acetyl-alpha-D-glucosamine: step 1/6. Functionally, involved in the biosynthesis of lipid A, a phosphorylated glycolipid that anchors the lipopolysaccharide to the outer membrane of the cell. This is Acyl-[acyl-carrier-protein]--UDP-N-acetylglucosamine O-acyltransferase from Wigglesworthia glossinidia brevipalpis.